The primary structure comprises 299 residues: Urease accessory protein UreD (299 aa).

The protein belongs to the UreD family. In terms of assembly, ureD, UreF and UreG form a complex that acts as a GTP-hydrolysis-dependent molecular chaperone, activating the urease apoprotein by helping to assemble the nickel containing metallocenter of UreC. The UreE protein probably delivers the nickel.

The protein resides in the cytoplasm. In terms of biological role, required for maturation of urease via the functional incorporation of the urease nickel metallocenter. The chain is Urease accessory protein UreD from Haloarcula marismortui (strain ATCC 43049 / DSM 3752 / JCM 8966 / VKM B-1809) (Halobacterium marismortui).